Reading from the N-terminus, the 531-residue chain is Endoglucanase 7 (531 aa).

The N-terminal stretch at 1–27 (MRGRALVLVAALLLQLLLLAAAGGAGA) is a signal peptide. Asp-89 (nucleophile) is an active-site residue. Active-site residues include His-430, Asp-482, and Glu-491.

Belongs to the glycosyl hydrolase 9 (cellulase E) family. Ubiquitous.

It localises to the secreted. The enzyme catalyses Endohydrolysis of (1-&gt;4)-beta-D-glucosidic linkages in cellulose, lichenin and cereal beta-D-glucans.. In Oryza sativa subsp. japonica (Rice), this protein is Endoglucanase 7 (GLU10).